The sequence spans 391 residues: MKFNKLSEQNLSGKRALIRVDMNVPLKNGVIGDDTRIRASLPTIEHCLKAGAAVLLMTHLGRPTEGEPKPEDSLAPVVARLSELLGKPVRLIADFHAGVELAPGEVAMLENVRLNKGEKKNNDELGRAYAALCDVFVHDAFGTAHRAEASTHAVAKFAPVACAGLLLSAELDALGKALQAPARPLVAIVAGSKVSTKLTILEALADKVDQLIVGGGIANTFLLAEGKAIGKSLAEADLVEDARRVIAKIRARGGDVPLPADVVCAKEFAETAAAATKNVAEVVADDMILDIGPDAAKQLAAIIAQAGTVVWNGPVGVFEFDQFGNGTKTLAQAIAQSKAFSIAGGGDTLAAIAKYGITDDISYISTGGGAFLEFLEGKELPAVAILAERAQ.

Substrate-binding positions include 21–23 (DMN), R36, 59–62 (HLGR), R113, and R146. Residues K197, E319, and 345-348 (GGDT) each bind ATP.

This sequence belongs to the phosphoglycerate kinase family. In terms of assembly, monomer.

It is found in the cytoplasm. It catalyses the reaction (2R)-3-phosphoglycerate + ATP = (2R)-3-phospho-glyceroyl phosphate + ADP. It participates in carbohydrate degradation; glycolysis; pyruvate from D-glyceraldehyde 3-phosphate: step 2/5. The polypeptide is Phosphoglycerate kinase (Chromobacterium violaceum (strain ATCC 12472 / DSM 30191 / JCM 1249 / CCUG 213 / NBRC 12614 / NCIMB 9131 / NCTC 9757 / MK)).